Reading from the N-terminus, the 102-residue chain is Late embryogenesis abundant protein D-19 (102 aa).

Residues 1–102 form a disordered region; the sequence is MASEQYQAMR…IDESKFRTKN (102 aa). Residues 48 to 58 are compositionally biased toward basic and acidic residues; the sequence is EGRHKGGETRK.

It belongs to the small hydrophilic plant seed protein family.

In terms of biological role, LEA proteins are late embryonic proteins abundant in higher plant seed embryos. There are two subsets of LEA proteins (5a and 5b), the first ones are expressed when the cotyledon weight reach 80 mg and the second set are expressed above 100 mg. The function of those proteins is not known. The protein is Late embryogenesis abundant protein D-19 of Gossypium hirsutum (Upland cotton).